Consider the following 94-residue polypeptide: MPGPTVVRFTARVVGRVQGVGFRDYVRTRGRRLGLVGTATNMPDGAVVVIAEGGAPACQNLARLLVTGHTPGWTDRVEVVWQRAQGDLADFRRK.

Positions 8-94 (RFTARVVGRV…QGDLADFRRK (87 aa)) constitute an Acylphosphatase-like domain. Catalysis depends on residues R23 and N41.

It belongs to the acylphosphatase family.

It catalyses the reaction an acyl phosphate + H2O = a carboxylate + phosphate + H(+). The chain is Acylphosphatase (acyP) from Frankia alni (strain DSM 45986 / CECT 9034 / ACN14a).